The primary structure comprises 222 residues: ATP-dependent Clp protease proteolytic subunit (222 aa).

Ser-125 (nucleophile) is an active-site residue. The active site involves His-150.

It belongs to the peptidase S14 family. Fourteen ClpP subunits assemble into 2 heptameric rings which stack back to back to give a disk-like structure with a central cavity, resembling the structure of eukaryotic proteasomes.

The protein resides in the cytoplasm. The enzyme catalyses Hydrolysis of proteins to small peptides in the presence of ATP and magnesium. alpha-casein is the usual test substrate. In the absence of ATP, only oligopeptides shorter than five residues are hydrolyzed (such as succinyl-Leu-Tyr-|-NHMec, and Leu-Tyr-Leu-|-Tyr-Trp, in which cleavage of the -Tyr-|-Leu- and -Tyr-|-Trp bonds also occurs).. Cleaves peptides in various proteins in a process that requires ATP hydrolysis. Has a chymotrypsin-like activity. Plays a major role in the degradation of misfolded proteins. This chain is ATP-dependent Clp protease proteolytic subunit, found in Porphyromonas gingivalis (strain ATCC BAA-308 / W83).